We begin with the raw amino-acid sequence, 493 residues long: Transcript termination protein A18 (493 aa).

In terms of domain architecture, Helicase ATP-binding spans 100 to 256 (MIESKRPLYI…NSIINIAKLS (157 aa)). Position 113–120 (113–120 (LACGFGKT)) interacts with ATP. A DESH box motif is present at residues 206-209 (DESH).

It belongs to the helicase family. Poxviruses subfamily. Interacts with G2. Might be part of a transcription complex composed at least of G2, A18, and H5.

Its subcellular location is the virion. In terms of biological role, DNA helicase which seems to act as a postreplicative transcription termination factor. Involved in ATP-dependent release of nascent RNA. Forms a stable complex with single-stranded DNA, and to a lesser extent RNA. The polypeptide is Transcript termination protein A18 (Vaccinia virus (strain Tian Tan) (VACV)).